Reading from the N-terminus, the 260-residue chain is tRNA pseudouridine synthase A (260 aa).

D60 serves as the catalytic Nucleophile. Y118 lines the substrate pocket.

Belongs to the tRNA pseudouridine synthase TruA family. As to quaternary structure, homodimer.

It carries out the reaction uridine(38/39/40) in tRNA = pseudouridine(38/39/40) in tRNA. Formation of pseudouridine at positions 38, 39 and 40 in the anticodon stem and loop of transfer RNAs. The chain is tRNA pseudouridine synthase A from Leuconostoc citreum (strain KM20).